Here is a 208-residue protein sequence, read N- to C-terminus: Small ribosomal subunit protein uS4 (208 aa).

The S4 RNA-binding domain maps to 98-178 (SRLDNVVYRM…RPKWLEYDAE (81 aa)).

This sequence belongs to the universal ribosomal protein uS4 family. In terms of assembly, part of the 30S ribosomal subunit. Contacts protein S5. The interaction surface between S4 and S5 is involved in control of translational fidelity.

One of the primary rRNA binding proteins, it binds directly to 16S rRNA where it nucleates assembly of the body of the 30S subunit. In terms of biological role, with S5 and S12 plays an important role in translational accuracy. This chain is Small ribosomal subunit protein uS4, found in Acetivibrio thermocellus (strain ATCC 27405 / DSM 1237 / JCM 9322 / NBRC 103400 / NCIMB 10682 / NRRL B-4536 / VPI 7372) (Clostridium thermocellum).